A 215-amino-acid polypeptide reads, in one-letter code: Peroxiredoxin (215 aa).

The region spanning 6 to 161 (PLIGEEFPRV…ILRAVKALQT (156 aa)) is the Thioredoxin domain. Cys48 acts as the Cysteine sulfenic acid (-SOH) intermediate in catalysis. Arg124 lines the substrate pocket. A disulfide bond links Cys205 and Cys211.

Belongs to the peroxiredoxin family. Prx6 subfamily. As to quaternary structure, homodecamer. Pentamer of dimers that assemble into a ring structure.

It localises to the cytoplasm. The enzyme catalyses a hydroperoxide + [thioredoxin]-dithiol = an alcohol + [thioredoxin]-disulfide + H2O. Its function is as follows. Thiol-specific peroxidase that catalyzes the reduction of hydrogen peroxide and organic hydroperoxides to water and alcohols, respectively. Plays a role in cell protection against oxidative stress by detoxifying peroxides. In Thermotoga maritima (strain ATCC 43589 / DSM 3109 / JCM 10099 / NBRC 100826 / MSB8), this protein is Peroxiredoxin.